We begin with the raw amino-acid sequence, 706 residues long: Transmembrane 9 superfamily member 3 (706 aa).

The first 33 residues, 1-33 (MRVRPKRSVITLMAIVVVMLILRNQFYSSRTRG), serve as a signal peptide directing secretion. Residues 34 to 290 (HGQEPVISSS…LSDEQSIQFH (257 aa)) lie on the Lumenal side of the membrane. A helical membrane pass occupies residues 291–311 (WMSLANSVGIVLSISFITLII). Over 312 to 371 (YVRVMYTDKSNSKSPKYMINIEGIETEDDLDDDKYGKYSVYTVAKDWIQNGRPNLFGLKV) the chain is Cytoplasmic. The chain crosses the membrane as a helical span at residues 372–392 (LILLVSFGVQFLFTIIGSLTI). Topologically, residues 393 to 405 (SCSMNKLHNVRNS) are lumenal. Residues 406-426 (VLTMAILFFVLGAFMASFVGT) traverse the membrane as a helical segment. Topologically, residues 427-456 (RLSMVTKTKRTKANYLDDNRYLKDYKKFSP) are cytoplasmic. A helical membrane pass occupies residues 457–477 (IFTILCGSSLPGIVMVSTFLL). Residues 478–494 (NSIVWAHDSTSALPFKT) are Lumenal-facing. The chain crosses the membrane as a helical span at residues 495-515 (IVFFMSIYFIVCIPLSLFGGI). Topologically, residues 516 to 553 (VANNIPLPQYWLSGITKDESNSDGNGLFVPKSRAKFNP) are cytoplasmic. The helical transmembrane segment at 554-574 (LVYCGIYLCGIFPLLVIYVEM) threads the bilayer. Residues 575–592 (QYVYKSLWLEKTTFYYFY) lie on the Lumenal side of the membrane. Residues 593-613 (GFLFLSIILLCVLTMEISIIG) form a helical membrane-spanning segment. Residues 614–637 (SYLLMRFCFEDKVVRNNWRWKCFE) lie on the Cytoplasmic side of the membrane. The chain crosses the membrane as a helical span at residues 638-658 (MGFSGGVYMELYSLYYIFAVL). The Lumenal portion of the chain corresponds to 659–665 (NIHGFSS). The chain crosses the membrane as a helical span at residues 666-686 (ILISICYSLIFNVMCSLGLGA). The Cytoplasmic segment spans residues 687-706 (LSYLTASWFINKIYHQKVNL).

The protein belongs to the nonaspanin (TM9SF) (TC 9.A.2) family.

Its subcellular location is the golgi apparatus membrane. With EMP70 and TMN2, plays a critical role in the late stages of a nutrient-controlled pathway notably regulating FLO11 gene expression. Acts downstream of RAS2 and TOR. Essential for cell adhesion and filamentous growth. May play a role as effector of cellular copper homeostasis. In Saccharomyces cerevisiae (strain ATCC 204508 / S288c) (Baker's yeast), this protein is Transmembrane 9 superfamily member 3 (TMN3).